Here is a 261-residue protein sequence, read N- to C-terminus: uncharacterized protein (261 aa).

A coiled-coil region spans residues 16-147; the sequence is KQTSLVLQNL…QTNVNVLRSQ (132 aa).

The protein localises to the cytoplasm. This is an uncharacterized protein from Schizosaccharomyces pombe (strain 972 / ATCC 24843) (Fission yeast).